A 362-amino-acid chain; its full sequence is MAATPIRVIVSALVILSVLLLSSSLGVATETEIERNETEVRLMYEQWLVENRKNYNGLGEKERRFKIFKDNLKFVDEHNSVPDRTFEVGLTRFADLTNEEFRAIYLRKKMERTKDSVKTERYLYKEGDVLPDEVDWRANGAVVSVKDQGNCGSCWAFSAVGAVEGINQITTGELISLSEQELVDCDRGFVNAGCDGGIMNYAFEFIMKNGGIETDQDYPYNANDLGLCNADKNNNTRVVTIDGYEDVPRDDEKSLKKAVAHQPVSVAIEASSQAFQLYKSGVMTGTCGISLDHGVVVVGYGSTSGEDYWIIRNSWGLNWGDSGYVKLQRNIDDPFGKCGIAMMPSYPTKSSFPSSFDLLSEI.

The N-terminal stretch at Met-1–Ala-28 is a signal peptide. A propeptide spans Thr-29–Val-129 (activation peptide). The N-linked (GlcNAc...) asparagine glycan is linked to Asn-36. Intrachain disulfides connect Cys-151–Cys-194 and Cys-185–Cys-228. Cys-154 is a catalytic residue. Asn-234 carries N-linked (GlcNAc...) asparagine glycosylation. Cys-287 and Cys-338 are joined by a disulfide. Active-site residues include His-293 and Asn-313.

The protein belongs to the peptidase C1 family.

In terms of biological role, probable thiol protease. The polypeptide is Probable cysteine protease RDL2 (Arabidopsis thaliana (Mouse-ear cress)).